Here is a 429-residue protein sequence, read N- to C-terminus: Enolase (429 aa).

(2R)-2-phosphoglycerate is bound at residue Gln-163. Glu-205 acts as the Proton donor in catalysis. Mg(2+) contacts are provided by Asp-242, Glu-286, and Asp-313. Lys-338, Arg-367, Ser-368, and Lys-389 together coordinate (2R)-2-phosphoglycerate. Lys-338 serves as the catalytic Proton acceptor.

This sequence belongs to the enolase family. Mg(2+) is required as a cofactor.

The protein resides in the cytoplasm. It localises to the secreted. Its subcellular location is the cell surface. The catalysed reaction is (2R)-2-phosphoglycerate = phosphoenolpyruvate + H2O. It functions in the pathway carbohydrate degradation; glycolysis; pyruvate from D-glyceraldehyde 3-phosphate: step 4/5. Functionally, catalyzes the reversible conversion of 2-phosphoglycerate (2-PG) into phosphoenolpyruvate (PEP). It is essential for the degradation of carbohydrates via glycolysis. The polypeptide is Enolase (Geobacter metallireducens (strain ATCC 53774 / DSM 7210 / GS-15)).